A 394-amino-acid polypeptide reads, in one-letter code: NAD(P)H-quinone oxidoreductase subunit H (394 aa).

Belongs to the complex I 49 kDa subunit family. NDH-1 can be composed of about 15 different subunits; different subcomplexes with different compositions have been identified which probably have different functions.

The protein localises to the cellular thylakoid membrane. It carries out the reaction a plastoquinone + NADH + (n+1) H(+)(in) = a plastoquinol + NAD(+) + n H(+)(out). It catalyses the reaction a plastoquinone + NADPH + (n+1) H(+)(in) = a plastoquinol + NADP(+) + n H(+)(out). In terms of biological role, NDH-1 shuttles electrons from an unknown electron donor, via FMN and iron-sulfur (Fe-S) centers, to quinones in the respiratory and/or the photosynthetic chain. The immediate electron acceptor for the enzyme in this species is believed to be plastoquinone. Couples the redox reaction to proton translocation, and thus conserves the redox energy in a proton gradient. Cyanobacterial NDH-1 also plays a role in inorganic carbon-concentration. This Prochlorococcus marinus (strain NATL2A) protein is NAD(P)H-quinone oxidoreductase subunit H.